The chain runs to 232 residues: Phosphatidylserine decarboxylase proenzyme (232 aa).

Catalysis depends on Ser190, which acts as the Schiff-base intermediate with substrate; via pyruvic acid. A Pyruvic acid (Ser); by autocatalysis modification is found at Ser190.

Belongs to the phosphatidylserine decarboxylase family. PSD-A subfamily. As to quaternary structure, heterodimer of a large membrane-associated beta subunit and a small pyruvoyl-containing alpha subunit. The cofactor is pyruvate. In terms of processing, is synthesized initially as an inactive proenzyme. Formation of the active enzyme involves a self-maturation process in which the active site pyruvoyl group is generated from an internal serine residue via an autocatalytic post-translational modification. Two non-identical subunits are generated from the proenzyme in this reaction, and the pyruvate is formed at the N-terminus of the alpha chain, which is derived from the carboxyl end of the proenzyme. The post-translation cleavage follows an unusual pathway, termed non-hydrolytic serinolysis, in which the side chain hydroxyl group of the serine supplies its oxygen atom to form the C-terminus of the beta chain, while the remainder of the serine residue undergoes an oxidative deamination to produce ammonia and the pyruvoyl prosthetic group on the alpha chain.

The protein localises to the cell membrane. The catalysed reaction is a 1,2-diacyl-sn-glycero-3-phospho-L-serine + H(+) = a 1,2-diacyl-sn-glycero-3-phosphoethanolamine + CO2. It functions in the pathway phospholipid metabolism; phosphatidylethanolamine biosynthesis; phosphatidylethanolamine from CDP-diacylglycerol: step 2/2. Functionally, catalyzes the formation of phosphatidylethanolamine (PtdEtn) from phosphatidylserine (PtdSer). The protein is Phosphatidylserine decarboxylase proenzyme of Rhizobium leguminosarum bv. trifolii (strain WSM2304).